The chain runs to 698 residues: Elongation factor G (698 aa).

Residues D10–L285 enclose the tr-type G domain. Residues A19–T26, D83–H87, and N137–D140 contribute to the GTP site.

Belongs to the TRAFAC class translation factor GTPase superfamily. Classic translation factor GTPase family. EF-G/EF-2 subfamily.

The protein resides in the cytoplasm. In terms of biological role, catalyzes the GTP-dependent ribosomal translocation step during translation elongation. During this step, the ribosome changes from the pre-translocational (PRE) to the post-translocational (POST) state as the newly formed A-site-bound peptidyl-tRNA and P-site-bound deacylated tRNA move to the P and E sites, respectively. Catalyzes the coordinated movement of the two tRNA molecules, the mRNA and conformational changes in the ribosome. This chain is Elongation factor G, found in Lactobacillus johnsonii (strain CNCM I-12250 / La1 / NCC 533).